The chain runs to 151 residues: Large-conductance mechanosensitive channel (151 aa).

A run of 2 helical transmembrane segments spans residues 12–32 (GNIVDLAVAVVIGTAFTALVT) and 71–91 (VLLSAAINFFLIAFAVYFLVV). The interval 122–151 (AQTNGDSPGRHGGRGTPSPTDGPLASTESQ) is disordered.

This sequence belongs to the MscL family. Homopentamer.

It is found in the cell membrane. Functionally, channel that opens in response to stretch forces in the membrane lipid bilayer. May participate in the regulation of osmotic pressure changes within the cell. This Mycobacterium bovis (strain BCG / Pasteur 1173P2) protein is Large-conductance mechanosensitive channel.